The following is a 299-amino-acid chain: Probable lipid kinase YegS (299 aa).

In terms of domain architecture, DAGKc spans 2–133 (AEFPASLLIL…IDMAQVNKQT (132 aa)). Residues Thr-40, 66–72 (GDGTINE), and Thr-95 each bind ATP. Mg(2+) is bound by residues Leu-215, Asp-218, and Leu-220. Glu-271 serves as the catalytic Proton acceptor.

This sequence belongs to the diacylglycerol/lipid kinase family. YegS lipid kinase subfamily. Mg(2+) is required as a cofactor. It depends on Ca(2+) as a cofactor.

Its subcellular location is the cytoplasm. In terms of biological role, probably phosphorylates lipids; the in vivo substrate is unknown. This is Probable lipid kinase YegS from Shigella dysenteriae serotype 1 (strain Sd197).